The primary structure comprises 501 residues: Ell-associated factor Eaf (501 aa).

Composition is skewed to polar residues over residues 138–149 and 173–192; these read NMGQGQLHSQGA and ENSTMRISTKTKVSTGSRRN. Disordered stretches follow at residues 138–226 and 256–501; these read NMGQ…PAWD and GHAN…DDDD. 2 stretches are compositionally biased toward low complexity: residues 200–221 and 256–270; these read RNSPMQQSSPSRPVPVHRSPQS and GHANTSGSSTGSATG. Ser202 carries the phosphoserine modification. Residues 271 to 283 show a composition bias toward polar residues; that stretch reads QTDFGSISSSSHI. Composition is skewed to low complexity over residues 302 to 314 and 329 to 343; these read QRQSPPMAQQQQP and QQQRQRNSPQQQRPP. The segment covering 393–408 has biased composition (acidic residues); that stretch reads DSSDSDSGSDSDDSTE. Low complexity-rich tracts occupy residues 416 to 437, 455 to 471, and 483 to 501; these read QQPVYQNQNHQQQQMAQQHLNQ, QQQQQQMVPHQQQQKQQ, and NDLLQNDLQLSSNSSDDDD.

It belongs to the EAF family.

It is found in the nucleus. Its function is as follows. Promotes transcriptional elongation by Su(Tpl)/ELL. Essential for development. The sequence is that of Ell-associated factor Eaf from Drosophila yakuba (Fruit fly).